A 437-amino-acid chain; its full sequence is UDP-glucose 6-dehydrogenase (437 aa).

Residues Val11, Asp30, Lys35, Thr86, Thr122, and Glu155 each coordinate NAD(+). Residues 151–155 (EFLRE), Lys209, Asn213, 254–258 (FLHAG), and Gly262 contribute to the substrate site. Cys265 serves as the catalytic Nucleophile. Residue Lys268 coordinates NAD(+). Residue Lys326 participates in substrate binding. Arg333 provides a ligand contact to NAD(+).

The protein belongs to the UDP-glucose/GDP-mannose dehydrogenase family.

It catalyses the reaction UDP-alpha-D-glucose + 2 NAD(+) + H2O = UDP-alpha-D-glucuronate + 2 NADH + 3 H(+). It participates in nucleotide-sugar biosynthesis; UDP-alpha-D-glucuronate biosynthesis; UDP-alpha-D-glucuronate from UDP-alpha-D-glucose: step 1/1. It functions in the pathway capsule biogenesis; capsule polysaccharide biosynthesis. The sequence is that of UDP-glucose 6-dehydrogenase from Rhizobium meliloti (strain 1021) (Ensifer meliloti).